A 382-amino-acid chain; its full sequence is UDP-4-amino-4-deoxy-L-arabinose--oxoglutarate aminotransferase (382 aa).

The residue at position 182 (lysine 182) is an N6-(pyridoxal phosphate)lysine.

Belongs to the DegT/DnrJ/EryC1 family. ArnB subfamily. Homodimer. Pyridoxal 5'-phosphate serves as cofactor.

The enzyme catalyses UDP-4-amino-4-deoxy-beta-L-arabinose + 2-oxoglutarate = UDP-beta-L-threo-pentopyranos-4-ulose + L-glutamate. It participates in nucleotide-sugar biosynthesis; UDP-4-deoxy-4-formamido-beta-L-arabinose biosynthesis; UDP-4-deoxy-4-formamido-beta-L-arabinose from UDP-alpha-D-glucuronate: step 2/3. The protein operates within bacterial outer membrane biogenesis; lipopolysaccharide biosynthesis. Catalyzes the conversion of UDP-4-keto-arabinose (UDP-Ara4O) to UDP-4-amino-4-deoxy-L-arabinose (UDP-L-Ara4N). The modified arabinose is attached to lipid A and is required for resistance to polymyxin and cationic antimicrobial peptides. This Pectobacterium atrosepticum (strain SCRI 1043 / ATCC BAA-672) (Erwinia carotovora subsp. atroseptica) protein is UDP-4-amino-4-deoxy-L-arabinose--oxoglutarate aminotransferase.